The following is a 426-amino-acid chain: Glutamate-1-semialdehyde 2,1-aminomutase (426 aa).

At K265 the chain carries N6-(pyridoxal phosphate)lysine.

It belongs to the class-III pyridoxal-phosphate-dependent aminotransferase family. HemL subfamily. In terms of assembly, homodimer. Pyridoxal 5'-phosphate is required as a cofactor.

It localises to the cytoplasm. The enzyme catalyses (S)-4-amino-5-oxopentanoate = 5-aminolevulinate. Its pathway is porphyrin-containing compound metabolism; protoporphyrin-IX biosynthesis; 5-aminolevulinate from L-glutamyl-tRNA(Glu): step 2/2. This Escherichia coli (strain SMS-3-5 / SECEC) protein is Glutamate-1-semialdehyde 2,1-aminomutase.